Reading from the N-terminus, the 505-residue chain is Calcium/calmodulin-dependent protein kinase kinase 1 (505 aa).

The disordered stretch occupies residues 28–66; the sequence is LEEADEGPEPARNGVDPPPRARAASVIPGSASRPTPVRP. 2 positions are modified to phosphoserine: serine 67 and serine 74. Arginine 78 carries the asymmetric dimethylarginine modification. Residues 84-105 are disordered; sequence LGAQVGPYSTGPASHISPRSWR. A Phosphoserine modification is found at serine 100. Phosphothreonine is present on threonine 108. Residues 128 to 409 enclose the Protein kinase domain; sequence YKLQSEIGKG…VSDIKLHPWV (282 aa). Residues 134–142 and lysine 157 contribute to the ATP site; that span reads IGKGAYGVV. The tract at residues 167 to 189 is RP domain; sequence QYGFPRRPPPRGSQATQGGPAKQ. Aspartate 275 acts as the Proton acceptor in catalysis. An autoinhibitory domain region spans residues 435–440; the sequence is KNSVRL. The interval 438–463 is calmodulin-binding; that stretch reads VRLIPSWTTVILVKSMLRKRSFGNPF. Residues serine 458, serine 475, and serine 492 each carry the phosphoserine modification. The segment at 460–505 is disordered; it reads GNPFEPQARREERSMSAPGSLLMKEGCGEGCKSPELPGVQEDEAAS.

It belongs to the protein kinase superfamily. Ser/Thr protein kinase family. In terms of assembly, interacts with CAMK4 and calmodulin. In terms of processing, appears to be autophosphorylated in a Ca(2+)/calmodulin-dependent manner. Phosphorylated at multiple sites by PRCAKA/PKA. Phosphorylation of Ser-458 is blocked upon binding to Ca(2+)/calmodulin. In vitro, phosphorylated by CAMK1 and CAMK4. In terms of tissue distribution, widely expressed. Differentially expressed in various brain regions.

The protein localises to the cytoplasm. It is found in the nucleus. The enzyme catalyses L-seryl-[protein] + ATP = O-phospho-L-seryl-[protein] + ADP + H(+). The catalysed reaction is L-threonyl-[protein] + ATP = O-phospho-L-threonyl-[protein] + ADP + H(+). Its activity is regulated as follows. Activated by Ca(2+)/calmodulin. Binding of calmodulin may relieve intrasteric autoinhibition. Partially inhibited upon phosphorylation by PRCAKA/PKA. May be regulated through phosphorylation by CAMK1 and CAMK4. Its function is as follows. Calcium/calmodulin-dependent protein kinase that belongs to a proposed calcium-triggered signaling cascade involved in a number of cellular processes. Phosphorylates CAMK1, CAMK1D, CAMK1G and CAMK4. Involved in regulating cell apoptosis. Promotes cell survival by phosphorylating AKT1/PKB that inhibits pro-apoptotic BAD/Bcl2-antagonist of cell death. The sequence is that of Calcium/calmodulin-dependent protein kinase kinase 1 (Camkk1) from Mus musculus (Mouse).